Consider the following 250-residue polypeptide: Ribosomal RNA small subunit methyltransferase J (250 aa).

S-adenosyl-L-methionine-binding positions include 101-102, 117-118, 153-154, and D171; these read RD, ER, and SS.

The protein belongs to the methyltransferase superfamily. RsmJ family.

The protein resides in the cytoplasm. The enzyme catalyses guanosine(1516) in 16S rRNA + S-adenosyl-L-methionine = N(2)-methylguanosine(1516) in 16S rRNA + S-adenosyl-L-homocysteine + H(+). Functionally, specifically methylates the guanosine in position 1516 of 16S rRNA. In Shigella flexneri serotype 5b (strain 8401), this protein is Ribosomal RNA small subunit methyltransferase J.